The chain runs to 103 residues: Small ribosomal subunit protein uS10 (103 aa).

It belongs to the universal ribosomal protein uS10 family. Part of the 30S ribosomal subunit.

Involved in the binding of tRNA to the ribosomes. This is Small ribosomal subunit protein uS10 from Xylella fastidiosa (strain 9a5c).